The chain runs to 325 residues: Probable exonuclease subunit 1 (325 aa).

In terms of assembly, could consist of two subunits: D13 and D12.

In terms of biological role, possible exonuclease involved in phage DNA recombination, replication, and repair. The sequence is that of Probable exonuclease subunit 1 (D12) from Escherichia coli (Enterobacteria phage T5).